The following is a 149-amino-acid chain: Calmodulin-like protein 3 (149 aa).

EF-hand domains are found at residues 8-43 (EQIA…LGQN), 44-79 (PTEA…KMKD), 81-116 (DSEE…LGEK), and 117-149 (LSDE…LVSK). Ca(2+)-binding residues include Asp21, Asp23, Asp25, Ser27, Glu32, Asp57, Asp59, Asn61, Thr63, Glu68, Asp94, Asp96, Asn98, Glu105, Asp130, Asp132, Asp134, Gln136, and Glu141.

Belongs to the calmodulin family. As to quaternary structure, interacts with MYO10, the interaction is calcium-dependent and essential for MYO10 function in filopodial extension.

Its function is as follows. May function as a specific light chain of unconventional myosin-10 (MYO10), also enhances MYO10 translation, possibly by acting as a chaperone for the emerging MYO10 heavy chain protein. May compete with calmodulin by binding, with different affinities, to cellular substrates. The chain is Calmodulin-like protein 3 (Calml3) from Mus musculus (Mouse).